Consider the following 748-residue polypeptide: Subtilisin-like protease (748 aa).

The N-terminal stretch at 1-24 (MMKMELRLLVSLIFILCSISMLAA) is a signal peptide. The Inhibitor I9 domain maps to 37–115 (TYIVHVKKSE…ARPERTLELH (79 aa)). The 479-residue stretch at 122-600 (FLGLKQGQGL…AGHVNPVKAN (479 aa)) folds into the Peptidase S8 domain. Catalysis depends on charge relay system residues Asp147 and His206. A PA domain is found at 365–454 (PLVYPGSFGY…VEVSYAAGLT (90 aa)). N-linked (GlcNAc...) asparagine glycans are attached at residues Asn376, Asn380, and Asn405. Ser533 serves as the catalytic Charge relay system. Residues Asn675 and Asn722 are each glycosylated (N-linked (GlcNAc...) asparagine).

Belongs to the peptidase S8 family.

The protein localises to the secreted. It is found in the extracellular space. Its subcellular location is the apoplast. Functionally, required for arbuscular mycorrhiza (AM) development during AM symbiosis with AM fungi (e.g. Glomeromycota intraradices). The protein is Subtilisin-like protease of Medicago truncatula (Barrel medic).